The chain runs to 98 residues: Small ribosomal subunit protein bS6 (98 aa).

This sequence belongs to the bacterial ribosomal protein bS6 family.

Its function is as follows. Binds together with bS18 to 16S ribosomal RNA. This is Small ribosomal subunit protein bS6 from Lacticaseibacillus paracasei (strain ATCC 334 / BCRC 17002 / CCUG 31169 / CIP 107868 / KCTC 3260 / NRRL B-441) (Lactobacillus paracasei).